Reading from the N-terminus, the 158-residue chain is Ribosome maturation factor RimP (158 aa).

Belongs to the RimP family.

It localises to the cytoplasm. Functionally, required for maturation of 30S ribosomal subunits. This Pseudomonas fluorescens (strain Pf0-1) protein is Ribosome maturation factor RimP.